A 37-amino-acid polypeptide reads, in one-letter code: Large ribosomal subunit protein bL36 (37 aa).

It belongs to the bacterial ribosomal protein bL36 family.

This chain is Large ribosomal subunit protein bL36, found in Synechococcus sp. (strain WH7803).